Consider the following 862-residue polypeptide: Valine--tRNA ligase (862 aa).

Residues 47–57 carry the 'HIGH' region motif; it reads PTASGSLHIGH. The segment at 110 to 130 is disordered; that stretch reads EPGLTPPFEGGDNKSSKAADQ. The segment covering 120 to 129 has biased composition (basic and acidic residues); that stretch reads GDNKSSKAAD. Positions 584-588 match the 'KMSKS' region motif; that stretch reads KMSKS. Lys587 contributes to the ATP binding site.

The protein belongs to the class-I aminoacyl-tRNA synthetase family. ValS type 2 subfamily. In terms of assembly, monomer.

The protein resides in the cytoplasm. It carries out the reaction tRNA(Val) + L-valine + ATP = L-valyl-tRNA(Val) + AMP + diphosphate. In terms of biological role, catalyzes the attachment of valine to tRNA(Val). As ValRS can inadvertently accommodate and process structurally similar amino acids such as threonine, to avoid such errors, it has a 'posttransfer' editing activity that hydrolyzes mischarged Thr-tRNA(Val) in a tRNA-dependent manner. This Leifsonia xyli subsp. xyli (strain CTCB07) protein is Valine--tRNA ligase.